The primary structure comprises 78 residues: Translational regulator CsrA (78 aa).

It belongs to the CsrA/RsmA family. Homodimer; the beta-strands of each monomer intercalate to form a hydrophobic core, while the alpha-helices form wings that extend away from the core.

The protein resides in the cytoplasm. Functionally, a translational regulator that binds mRNA to regulate translation initiation and/or mRNA stability. Usually binds in the 5'-UTR at or near the Shine-Dalgarno sequence preventing ribosome-binding, thus repressing translation. Its main target seems to be the major flagellin gene, while its function is anatagonized by FliW. In Oleidesulfovibrio alaskensis (strain ATCC BAA-1058 / DSM 17464 / G20) (Desulfovibrio alaskensis), this protein is Translational regulator CsrA.